The primary structure comprises 534 residues: MTMMNEKLKKEKKKIFGVITPFQKYLYTPRIINTVHLIIMSSKGITKKKVKSLKNLDSTKKLAEKIKQQALQKQQKQQKQQEQENANHNQTESSLSSSSSTTSSSITTIDPDAELKFKTFKELNLVPDLLESIESMKFTKPTPIQSEAIPHALEGKDIIGLAQTGSGKTAAFAIPILQSLWHAQQPYFALVLAPTRELAFQIKDTFDALGSSMGLRSSCIVGGMDMMDQARDLMRKPHVIVATPGRIMDHLEHTKGFSLKNLKYLVMDEADRLLDMDFGPALDKILKVIPIKRTTYLFSATMTNKIEKLQRASLHNPVRVAVSSKYQTADNLVQSMMLVNDGYKNTILIHLLNEFMGKSIIVFTRTVAHAQRTALLARILGFNAVPLHGQLSQSQRLGSLNKFKSNQANILVATDVAARGLDIPSVDVVINYDIPTDSKAYIHRVGRTARAGRSGKSISLITQYDLEMYLRIESVLGKKLPKEDKPPKEVLDALHVHVDKATAEAIRQTKEIHDKRNGGGGRRRNRDDADREER.

The tract at residues 67–107 (KQQALQKQQKQQKQQEQENANHNQTESSLSSSSSTTSSSIT) is disordered. 2 stretches are compositionally biased toward low complexity: residues 68 to 80 (QQAL…QQKQ) and 91 to 107 (TESS…SSIT). A Q motif motif is present at residues 118–146 (KTFKELNLVPDLLESIESMKFTKPTPIQS). Residues 149–320 (IPHALEGKDI…RASLHNPVRV (172 aa)) enclose the Helicase ATP-binding domain. 162–169 (AQTGSGKT) is a binding site for ATP. Positions 268 to 271 (DEAD) match the DEAD box motif. The Helicase C-terminal domain occupies 347–492 (ILIHLLNEFM…EDKPPKEVLD (146 aa)). Basic and acidic residues-rich tracts occupy residues 505–517 (AIRQ…DKRN) and 525–534 (NRDDADREER). Residues 505-534 (AIRQTKEIHDKRNGGGGRRRNRDDADREER) form a disordered region.

It belongs to the DEAD box helicase family. DDX47/RRP3 subfamily. Interacts with the SSU processome.

Its subcellular location is the nucleus. It catalyses the reaction ATP + H2O = ADP + phosphate + H(+). In terms of biological role, ATP-dependent rRNA helicase required for pre-ribosomal RNA processing. Involved in the maturation of the 35S-pre-rRNA and to its cleavage to mature 18S rRNA. This is ATP-dependent rRNA helicase RRP3 from Candida albicans (strain SC5314 / ATCC MYA-2876) (Yeast).